Consider the following 520-residue polypeptide: UBX domain-containing protein 11 (520 aa).

Residues 1–26 (MSSPLASLSKTRKVPLPSEPMNPGRR) are disordered. The stretch at 76–149 (MAFMTRKLWD…VREMERFLSD (74 aa)) forms a coiled coil. Residues 230–294 (LEPIPLKLYR…VSDLRNQVYL (65 aa)) form the SEP domain. Residues 392–469 (PAPPLSMLRI…GLVPKAALLL (78 aa)) form the UBX domain. A disordered region spans residues 476–520 (KSSLKFSPGPCPGPGPGPSPGPGPGPSPGPGPGPSPCPGPSPSPQ). The segment covering 484 to 520 (GPCPGPGPGPSPGPGPGPSPGPGPGPSPCPGPSPSPQ) has biased composition (pro residues). Tandem repeats lie at residues 487–494 (PGPGPGPS), 495–502 (PGPGPGPS), and 503–510 (PGPGPGPS). The segment at 487–510 (PGPGPGPSPGPGPGPSPGPGPGPS) is 3 X 8 AA tandem repeats of P-G-P-G-P-G-P-S.

Interacts with GNA12, GNA13, RND1, RND2 and RND3.

It localises to the cytoplasm. It is found in the cytoskeleton. Its function is as follows. May be involved in the reorganization of actin cytoskeleton mediated by RND1, RND2 and RND3. Promotes RHOA activation mediated by GNA12 and GNA13. In Homo sapiens (Human), this protein is UBX domain-containing protein 11 (UBXN11).